Reading from the N-terminus, the 71-residue chain is Phosphatidylinositol N-acetylglucosaminyltransferase subunit Y (71 aa).

At 1-3 (MFL) the chain is on the cytoplasmic side. A helical transmembrane segment spans residues 4-26 (SLPMLTVLIPLVSLAGLFYSASV). Residues 27-44 (EDDFPQGCTSTTSLCFYS) are Lumenal-facing. A helical membrane pass occupies residues 45 to 65 (LLLPITIPVYVFFHLWTWMGI). Over 66–71 (KLFRHN) the chain is Cytoplasmic.

Component of the glycosylphosphatidylinositol-N-acetylglucosaminyltransferase (GPI-GnT) complex composed at least by PIGA, PIGC, PIGH, PIGP, PIGQ, PIGY and DPM2. Interacts directly with PIGA; this interaction regulates glycosylphosphatidylinositol-N-acetylglucosaminyltransferase activity. Does not interact with Ras proteins.

The protein resides in the endoplasmic reticulum membrane. It functions in the pathway glycolipid biosynthesis; glycosylphosphatidylinositol-anchor biosynthesis. Its function is as follows. Part of the glycosylphosphatidylinositol-N-acetylglucosaminyltransferase (GPI-GnT) complex that catalyzes the transfer of N-acetylglucosamine from UDP-N-acetylglucosamine to phosphatidylinositol and participates in the first step of GPI biosynthesis. May act by regulating the catalytic subunit PIGA. The chain is Phosphatidylinositol N-acetylglucosaminyltransferase subunit Y from Bos taurus (Bovine).